Reading from the N-terminus, the 602-residue chain is MREHLNCLHKKVQEFPTTSGCYKMYSQDNKILYIGKAKNLRSRLKNYFLEKISLKTKILMRNVVNIEVITTNSEYEALLLECNLIKEHKPDYNIKLKDDKGYPMIRITCEKYPKVFKTRKIINDGSEYFGPYVNAKHLDLVLNLINKTFKTRKCKKKSKNPCLYFHMGQCLGVCYRNDLEEQYKEEVNKIRHILNGNISKLLDEIEIKMKEVIKREDFESAIKLKETKRSLIEISQTQIITKINKLSTDYIYIHKTDNLNVIVIFKYKDGKLVEKDINFDESIYEEEELIAEFITQYYTSLNMIVPDKICIFKKIETEDITKLINELKSTNTEIVYEETKDAIKIMEMAISNAEIALKAYNNEKNKALENLKIILEMTKLPKTIEGFDIAHLNGYKTVASLVTFKMGKPFKDGYRVYKINSLNDGEINDFKAIKEIISRRYTKLINEQLELPTLILIDGGKGQLNAAYSILKGLKIEDKVTICALAKQEETIFLPNKTQGIKLPKGNPALKILQNVRDESHRKANSFNRKLRKNIKLNYSKIEGIGEKKAKNILKTLGTYKDIFLLNEDEIAQKMKINIKMAKKIKKFSEDQNLKNTHSIES.

One can recognise a GIY-YIG domain in the interval 17 to 94; the sequence is TTSGCYKMYS…IKEHKPDYNI (78 aa). The 36-residue stretch at 199-234 folds into the UVR domain; it reads SKLLDEIEIKMKEVIKREDFESAIKLKETKRSLIEI.

Belongs to the UvrC family. As to quaternary structure, interacts with UvrB in an incision complex.

Its subcellular location is the cytoplasm. Functionally, the UvrABC repair system catalyzes the recognition and processing of DNA lesions. UvrC both incises the 5' and 3' sides of the lesion. The N-terminal half is responsible for the 3' incision and the C-terminal half is responsible for the 5' incision. This is UvrABC system protein C from Borrelia turicatae (strain 91E135).